We begin with the raw amino-acid sequence, 189 residues long: Peptidyl-tRNA hydrolase (189 aa).

Histidine 19 functions as the Proton acceptor in the catalytic mechanism. Positions 64, 66, and 112 each coordinate tRNA.

This sequence belongs to the PTH family. As to quaternary structure, monomer.

It localises to the cytoplasm. It catalyses the reaction an N-acyl-L-alpha-aminoacyl-tRNA + H2O = an N-acyl-L-amino acid + a tRNA + H(+). In terms of biological role, hydrolyzes ribosome-free peptidyl-tRNAs (with 1 or more amino acids incorporated), which drop off the ribosome during protein synthesis, or as a result of ribosome stalling. Catalyzes the release of premature peptidyl moieties from peptidyl-tRNA molecules trapped in stalled 50S ribosomal subunits, and thus maintains levels of free tRNAs and 50S ribosomes. The chain is Peptidyl-tRNA hydrolase from Gluconobacter oxydans (strain 621H) (Gluconobacter suboxydans).